Reading from the N-terminus, the 179-residue chain is Probable chorismate pyruvate-lyase (179 aa).

Arg-82, Leu-120, and Glu-165 together coordinate substrate.

This sequence belongs to the UbiC family.

It is found in the cytoplasm. It carries out the reaction chorismate = 4-hydroxybenzoate + pyruvate. It functions in the pathway cofactor biosynthesis; ubiquinone biosynthesis. Removes the pyruvyl group from chorismate, with concomitant aromatization of the ring, to provide 4-hydroxybenzoate (4HB) for the ubiquinone pathway. The sequence is that of Probable chorismate pyruvate-lyase from Vibrio vulnificus (strain YJ016).